Reading from the N-terminus, the 609-residue chain is Probable G-protein coupled receptor 153 (609 aa).

At M1 to A11 the chain is on the extracellular side. The helical transmembrane segment at V12–V32 threads the bilayer. Residues G33–P41 lie on the Cytoplasmic side of the membrane. Residues L42–A62 form a helical membrane-spanning segment. Residues T63–K84 lie on the Extracellular side of the membrane. A helical membrane pass occupies residues V85–S105. Over Y106–Q126 the chain is Cytoplasmic. Residues A127–V147 form a helical membrane-spanning segment. The Extracellular segment spans residues G148 to C175. A helical membrane pass occupies residues F176–F196. Residues Q197 to T243 lie on the Cytoplasmic side of the membrane. A helical transmembrane segment spans residues G244–V264. Topologically, residues S265 to P276 are extracellular. The chain crosses the membrane as a helical span at residues W277–L297. Topologically, residues W298–S609 are cytoplasmic. 2 disordered regions span residues D446 to A496 and A514 to S609. Composition is skewed to low complexity over residues E458–P479 and A527–E536. A compositionally biased stretch (gly residues) spans E571–S583. Positions T584 to G596 are enriched in low complexity.

It belongs to the G-protein coupled receptor 1 family.

It is found in the cell membrane. Orphan receptor. The protein is Probable G-protein coupled receptor 153 (GPR153) of Homo sapiens (Human).